The following is a 121-amino-acid chain: Chorion protein S15 (121 aa).

The first 18 residues, 1 to 18 (MKYLFVCVSLALFAYISA), serve as a signal peptide directing secretion.

This sequence belongs to the chorion protein S15/S18 family.

The protein resides in the secreted. Functionally, chorion membrane (egg shell) protein; plays a role in protecting the egg from the environment. In Drosophila subobscura (Fruit fly), this protein is Chorion protein S15 (Cp15).